A 431-amino-acid chain; its full sequence is Galactose-3-O-sulfotransferase 3 (431 aa).

Residues M1–K19 are Cytoplasmic-facing. The chain crosses the membrane as a helical; Signal-anchor for type II membrane protein span at residues I20–L40. Topologically, residues S41–T431 are lumenal. Residues N91, N110, N177, and N302 are each glycosylated (N-linked (GlcNAc...) asparagine). The disordered stretch occupies residues K400–T431. Low complexity predominate over residues I421–T431.

The protein belongs to the galactose-3-O-sulfotransferase family. It depends on Mg(2+) as a cofactor.

It localises to the golgi apparatus. The protein localises to the golgi stack membrane. It functions in the pathway protein modification; carbohydrate sulfation. In terms of biological role, transfers a sulfate to position 3 of non-reducing beta-galactosyl residues in N-glycans and core2-branched O-glycans. Has high activity towards Gal-beta-1,4-GlcNAc, Gal-beta-1,4(Fuc-alpha-1,3)GlcNAc and lower activity towards Gal-beta-1,3(Fuc-alpha-1,4)GlcNAc. This chain is Galactose-3-O-sulfotransferase 3 (Gal3st3), found in Mus musculus (Mouse).